The primary structure comprises 130 residues: MLNWSTIEWDSFWQQHDCGCFTFECDFITSIDPLVHDYAIYHSLSQKTVLEMLQTHLVAGPDASETIRRQVAFLIYDFHRLSCNCDKCYGDCNATTTGRFKVVDRVLNDHIEFGIMRRQDLIPILHNLET.

This is an uncharacterized protein from Citrus leprosis virus C (isolate Citrus sinesis/Brazil/Cordeiropolis/2003) (CiLV-C).